A 279-amino-acid chain; its full sequence is PHO85 cyclin-1 (279 aa).

One can recognise a Cyclin N-terminal domain in the interval 19 to 152 (DIIKFLTDTT…LLQLLNWDLR (134 aa)). Residues 29-36 (LRVVPSSN) form a required for degradation by DMA1 region. A Phosphothreonine; by PHO85 modification is found at T39. S43 carries the post-translational modification Phosphoserine; by PHO85. Glycyl lysine isopeptide (Lys-Gly) (interchain with G-Cter in ubiquitin) cross-links involve residues K82 and K121.

This sequence belongs to the cyclin family. PCL1,2 subfamily. As to quaternary structure, forms a cyclin-CDK complex with PHO85. Interacts with HMS1, NCP1 and NPA3. Interacts with DMA1. Phosphorylated by PHO85; necessary for interaction with DMA1 and subsequent degradation. Post-translationally, ubiquitinated by E3 ubiquitin ligase DMA1 in response to nutrient condition; this targets PCL1 for destruction.

It localises to the cytoplasm. The protein localises to the nucleus. G1/S-specific cyclin partner of the cyclin-dependent kinase (CDK) PHO85. Essential for the control of the cell cycle at the G1/S (start) transition. The PCL1-PHO85 cyclin-CDK holoenzyme is involved in phosphorylation of the CDK inhibitor (CKI) SIC1, which is required for its ubiquitination and degradation, releasing repression of b-type cyclins and promoting exit from mitosis. Together with cyclin PCL2, positively controls degradation of sphingoid long chain base kinase LCB4. PCL1-PHO85 phosphorylates LCB4, which is required for its ubiquitination and degradation. PCL1-PHO85 also phosphorylates HMS1, NCP1 and NPA3, which may all have a role in mitotic exit. This Saccharomyces cerevisiae (strain ATCC 204508 / S288c) (Baker's yeast) protein is PHO85 cyclin-1.